The sequence spans 144 residues: uncharacterized protein (144 aa).

The segment at 90 to 144 is disordered; that stretch reads KKEYSALKKSGKIHKVGGSKSSGHRKTKKPKKSMKGGSKTKKLSEKQLMKELLAM. Residues 98 to 130 are compositionally biased toward basic residues; it reads KSGKIHKVGGSKSSGHRKTKKPKKSMKGGSKTK.

This is an uncharacterized protein from Sputnik virophage.